We begin with the raw amino-acid sequence, 110 residues long: U1-lycotoxin-Ls1cc (110 aa).

The signal sequence occupies residues 1-20 (MKFVLLFGVLLVTLFSYSSA). Residues 21 to 44 (EMLDDFDQADEDELLSLIEKEEAR) constitute a propeptide that is removed on maturation. Disulfide bonds link cysteine 47–cysteine 62, cysteine 54–cysteine 71, cysteine 61–cysteine 89, and cysteine 73–cysteine 87.

It belongs to the neurotoxin 19 (CSTX) family. 03 subfamily. As to expression, expressed by the venom gland.

The protein resides in the secreted. In Lycosa singoriensis (Wolf spider), this protein is U1-lycotoxin-Ls1cc.